The primary structure comprises 348 residues: NADH-cytochrome b5 reductase 2 (348 aa).

The helical transmembrane segment at 41-61 (TLLYGAAAAAVAGAGYYFLGG) threads the bilayer. The 106-residue stretch at 97-202 (QGWVSLKLEE…KGPLPKYPWT (106 aa)) folds into the FAD-binding FR-type domain. 205–240 (KHGHIALVAGGTGITPMFQLCRAIFNNPDDQTKVTL) is an FAD binding site.

It belongs to the flavoprotein pyridine nucleotide cytochrome reductase family. Requires FAD as cofactor.

The protein resides in the mitochondrion outer membrane. It catalyses the reaction 2 Fe(III)-[cytochrome b5] + NADH = 2 Fe(II)-[cytochrome b5] + NAD(+) + H(+). In terms of biological role, may mediate the reduction of outer membrane cytochrome b5. The protein is NADH-cytochrome b5 reductase 2 (MCR1) of Chaetomium globosum (strain ATCC 6205 / CBS 148.51 / DSM 1962 / NBRC 6347 / NRRL 1970) (Soil fungus).